The sequence spans 152 residues: Ribosome maturation factor RimP (152 aa).

Belongs to the RimP family.

It is found in the cytoplasm. In terms of biological role, required for maturation of 30S ribosomal subunits. In Citrobacter koseri (strain ATCC BAA-895 / CDC 4225-83 / SGSC4696), this protein is Ribosome maturation factor RimP.